Here is a 212-residue protein sequence, read N- to C-terminus: uncharacterized protein (212 aa).

The Toprim domain maps to 105-187 (NTIYLVEGDF…QVKVVQLKGK (83 aa)).

This is an uncharacterized protein from Mycoplasma pneumoniae (strain ATCC 29342 / M129 / Subtype 1) (Mycoplasmoides pneumoniae).